The following is a 326-amino-acid chain: Probable cell division protein WhiA (326 aa).

The segment at residues 275 to 308 is a DNA-binding region (H-T-H motif); sequence SLDELGRLADPPMTKDAIAGRIRRLLAMADKRAL.

Belongs to the WhiA family.

In terms of biological role, involved in cell division and chromosome segregation. The sequence is that of Probable cell division protein WhiA from Paenarthrobacter aurescens (strain TC1).